Reading from the N-terminus, the 383-residue chain is Succinyl-diaminopimelate desuccinylase (383 aa).

A Zn(2+)-binding site is contributed by H73. D75 is an active-site residue. A Zn(2+)-binding site is contributed by D107. Residue E141 is the Proton acceptor of the active site. Zn(2+) contacts are provided by E142, E170, and H356.

The protein belongs to the peptidase M20A family. DapE subfamily. As to quaternary structure, homodimer. Zn(2+) serves as cofactor. It depends on Co(2+) as a cofactor.

The catalysed reaction is N-succinyl-(2S,6S)-2,6-diaminopimelate + H2O = (2S,6S)-2,6-diaminopimelate + succinate. Its pathway is amino-acid biosynthesis; L-lysine biosynthesis via DAP pathway; LL-2,6-diaminopimelate from (S)-tetrahydrodipicolinate (succinylase route): step 3/3. In terms of biological role, catalyzes the hydrolysis of N-succinyl-L,L-diaminopimelic acid (SDAP), forming succinate and LL-2,6-diaminopimelate (DAP), an intermediate involved in the bacterial biosynthesis of lysine and meso-diaminopimelic acid, an essential component of bacterial cell walls. This is Succinyl-diaminopimelate desuccinylase from Pseudomonas putida (strain GB-1).